The chain runs to 57 residues: MLCAHFSDQGPAHLTTSKSAFLSNKKTSTLKHLLGETRSDGSACNSGISGGRGRKIP.

The segment at R38–P57 is disordered.

In terms of tissue distribution, highly expressed in prostate, rectum, and distal colon, and weakly expressed in bladder. Expressed in prostate cancer cell lines.

It localises to the nucleus. The sequence is that of Small nuclear protein PRAC1 (PRAC1) from Homo sapiens (Human).